The primary structure comprises 450 residues: Beta-glucosidase (450 aa).

Glu166 functions as the Proton donor in the catalytic mechanism. Glu355 functions as the Nucleophile in the catalytic mechanism.

It belongs to the glycosyl hydrolase 1 family.

The enzyme catalyses Hydrolysis of terminal, non-reducing beta-D-glucosyl residues with release of beta-D-glucose.. The chain is Beta-glucosidase (bglA) from Niallia circulans (Bacillus circulans).